The chain runs to 470 residues: Ubiquitin carboxyl-terminal hydrolase calypso (470 aa).

A UCH catalytic domain is found at 43–274; that stretch reads GWLELESDPG…IRFNLMAVVP (232 aa). Cysteine 129 acts as the Nucleophile in catalysis. Histidine 211 serves as the catalytic Proton donor. Residues 305–324 form a disordered region; the sequence is DEQGEGGNGDPQRPDTPSTL. A ULD domain is found at 373 to 401; it reads NYDKFICTFLSMLAHQGVLGELVSQHLLP. Residues 403-470 form a positively charged C-terminal tail required for binding nucleosomes region; the sequence is KKISGQSAAN…KGRNKCKKRK (68 aa). Residues 422–451 show a composition bias toward low complexity; it reads ANAGATAAGAAGAAPKSQQQQAAAAKNGKS. Residues 422-470 are disordered; the sequence is ANAGATAAGAAGAAPKSQQQQAAAAKNGKSPSKTPGRRRKGRNKCKKRK. Positions 456-470 are enriched in basic residues; sequence PGRRRKGRNKCKKRK.

This sequence belongs to the peptidase C12 family. BAP1 subfamily. Catalytic component of the polycomb repressive deubiquitinase (PR-DUB) complex, at least composed of caly/calypso, Asx and sba (MBD5/6 homolog). The PR-DUB complex associates with nucleosomes to mediate deubiquitination of histone H2AK118ub1 substrates; the association requires the positively charged C-terminal tail of caly, probably due to direct binding of DNA. Interacts (via ULD domain) with Asx (via DEUBAD domain); the interaction produces a stable heterodimer with a composite binding site for ubiquitin. Homodimerizes (via coiled-coil hinge-region between the UCH and ULD domains) to mediate assembly of 2 copies of the caly-Asx heterodimer into a bisymmetric tetramer; dimerization enhances PR-DUB association with nucleosomes.

Its subcellular location is the nucleus. The enzyme catalyses Thiol-dependent hydrolysis of ester, thioester, amide, peptide and isopeptide bonds formed by the C-terminal Gly of ubiquitin (a 76-residue protein attached to proteins as an intracellular targeting signal).. In terms of biological role, catalytic component of the polycomb repressive deubiquitinase (PR-DUB) complex, a complex that specifically mediates deubiquitination of histone H2A monoubiquitinated at 'Lys-119' (H2AK118ub1). Mediates bisymmetric organization of the PR-DUB complex and is involved in association with nucleosomes to mediate deubiquitination. Does not deubiquitinate monoubiquitinated histone H2B. Required to maintain the transcriptionally repressive state of homeotic genes throughout development. The PR-DUB complex has weak or no activity toward 'Lys-48'- and 'Lys-63'-linked polyubiquitin chains. Polycomb group (PcG) protein. This Drosophila ananassae (Fruit fly) protein is Ubiquitin carboxyl-terminal hydrolase calypso.